The primary structure comprises 126 residues: Fluoride-specific ion channel FluC 2 (126 aa).

4 helical membrane passes run 11–31, 43–63, 69–89, and 93–113; these read IFLI…LCEL, VLGS…GFIG, AFGT…VQSF, and FFPA…GVFM. Positions 76 and 79 each coordinate Na(+).

The protein belongs to the fluoride channel Fluc/FEX (TC 1.A.43) family.

The protein resides in the cell membrane. The catalysed reaction is fluoride(in) = fluoride(out). With respect to regulation, na(+) is not transported, but it plays an essential structural role and its presence is essential for fluoride channel function. Functionally, fluoride-specific ion channel. Important for reducing fluoride concentration in the cell, thus reducing its toxicity. This Methanosarcina barkeri (strain Fusaro / DSM 804) protein is Fluoride-specific ion channel FluC 2.